The primary structure comprises 170 residues: Urease accessory protein UreE (170 aa).

The disordered stretch occupies residues Glu134–Glu170.

This sequence belongs to the UreE family.

The protein localises to the cytoplasm. Functionally, involved in urease metallocenter assembly. Binds nickel. Probably functions as a nickel donor during metallocenter assembly. The sequence is that of Urease accessory protein UreE from Janthinobacterium sp. (strain Marseille) (Minibacterium massiliensis).